Consider the following 430-residue polypeptide: Probable WRKY transcription factor 14 (430 aa).

The WRKY DNA-binding region spans 211–277 (SGEVVPSDLW…YTSEHNHPWP (67 aa)). The interval 283–366 (LAGSTRSSTS…APYRPELHDH (84 aa)) is disordered. The segment covering 286–306 (STRSSTSSSSNPNPSKPSTAN) has biased composition (low complexity). Polar residues predominate over residues 307-319 (VNSSSIGSQNTIY). Residues 340–354 (GDDMELENVDDDDDN) are compositionally biased toward acidic residues.

This sequence belongs to the WRKY group II-e family.

It localises to the nucleus. Functionally, transcription factor. Interacts specifically with the W box (5'-(T)TGAC[CT]-3'), a frequently occurring elicitor-responsive cis-acting element. The sequence is that of Probable WRKY transcription factor 14 (WRKY14) from Arabidopsis thaliana (Mouse-ear cress).